The following is a 232-amino-acid chain: Peptidyl-prolyl cis-trans isomerase CYP26-1 (232 aa).

A PPIase cyclophilin-type domain is found at 7–166 (FFDLTVDGKP…KPVVIADCGE (160 aa)). N-linked (GlcNAc...) asparagine glycosylation is present at asparagine 108. Residues 212-232 (YYLINIVVACMVLMCFWSWFV) form a helical membrane-spanning segment.

The protein belongs to the cyclophilin-type PPIase family. In terms of tissue distribution, expressed only in flowers.

It is found in the membrane. It carries out the reaction [protein]-peptidylproline (omega=180) = [protein]-peptidylproline (omega=0). PPIases accelerate the folding of proteins. It catalyzes the cis-trans isomerization of proline imidic peptide bonds in oligopeptides. In Arabidopsis thaliana (Mouse-ear cress), this protein is Peptidyl-prolyl cis-trans isomerase CYP26-1 (CYP26-1).